The chain runs to 255 residues: 4-diphosphocytidyl-2-C-methyl-D-erythritol kinase (255 aa).

Lys6 is an active-site residue. 95–105 lines the ATP pocket; the sequence is PVCAGLGGGSS. Asp137 is a catalytic residue.

It belongs to the GHMP kinase family. IspE subfamily.

It catalyses the reaction 4-CDP-2-C-methyl-D-erythritol + ATP = 4-CDP-2-C-methyl-D-erythritol 2-phosphate + ADP + H(+). The protein operates within isoprenoid biosynthesis; isopentenyl diphosphate biosynthesis via DXP pathway; isopentenyl diphosphate from 1-deoxy-D-xylulose 5-phosphate: step 3/6. Functionally, catalyzes the phosphorylation of the position 2 hydroxy group of 4-diphosphocytidyl-2C-methyl-D-erythritol. The polypeptide is 4-diphosphocytidyl-2-C-methyl-D-erythritol kinase (Campylobacter jejuni subsp. doylei (strain ATCC BAA-1458 / RM4099 / 269.97)).